The following is a 1070-amino-acid chain: Tail spike protein (1070 aa).

Its subcellular location is the virion. Functionally, structural component of the short non-contractile tail. The tail comprises six spikes that mediate primary attachment to the host cell lipopolysaccharides (LPS) and display endorhamnosidase enzymatic activity, hydrolyzing the linkage between rhamnose and galactose of the O-antigen polysaccharide. Digestion of the LPS brings the capsid near the cell outer membrane. The protein is Tail spike protein of Salmonella phage epsilon15.